A 227-amino-acid polypeptide reads, in one-letter code: MAYPFQLGLQDATSPIMEELTNFHDHTLMIVFLISSLVLYIISLMLTTKLTHTSTMDAQEVETIWTILPAVILILIALPSLRILYMMDEINNPVLTVKTMGHQWYWSYEYTDYEDLCFDSYMVPTNDLKPGELRLLEVDNRVVLPMELPIRMLISSEDVLHSWAVPSLGLKTDAIPGRLNQATVTSNRPGLFYGQCSEICGSNHSFMPIVLEMVPLKYFENWSASMI.

The Mitochondrial intermembrane portion of the chain corresponds to 1–14; it reads MAYPFQLGLQDATS. Residues 15–45 traverse the membrane as a helical segment; the sequence is PIMEELTNFHDHTLMIVFLISSLVLYIISLM. Residues 46–59 lie on the Mitochondrial matrix side of the membrane; that stretch reads LTTKLTHTSTMDAQ. The helical transmembrane segment at 60–87 threads the bilayer; it reads EVETIWTILPAVILILIALPSLRILYMM. Residues 88–227 are Mitochondrial intermembrane-facing; it reads DEINNPVLTV…YFENWSASMI (140 aa). Positions 161, 196, 198, 200, 204, and 207 each coordinate Cu cation. Mg(2+) is bound at residue Glu-198. Tyr-218 is subject to Phosphotyrosine.

Belongs to the cytochrome c oxidase subunit 2 family. Component of the cytochrome c oxidase (complex IV, CIV), a multisubunit enzyme composed of 14 subunits. The complex is composed of a catalytic core of 3 subunits MT-CO1, MT-CO2 and MT-CO3, encoded in the mitochondrial DNA, and 11 supernumerary subunits COX4I, COX5A, COX5B, COX6A, COX6B, COX6C, COX7A, COX7B, COX7C, COX8 and NDUFA4, which are encoded in the nuclear genome. The complex exists as a monomer or a dimer and forms supercomplexes (SCs) in the inner mitochondrial membrane with NADH-ubiquinone oxidoreductase (complex I, CI) and ubiquinol-cytochrome c oxidoreductase (cytochrome b-c1 complex, complex III, CIII), resulting in different assemblies (supercomplex SCI(1)III(2)IV(1) and megacomplex MCI(2)III(2)IV(2)). Found in a complex with TMEM177, COA6, COX18, COX20, SCO1 and SCO2. Interacts with TMEM177 in a COX20-dependent manner. Interacts with COX20. Interacts with COX16. The cofactor is Cu cation.

It localises to the mitochondrion inner membrane. It catalyses the reaction 4 Fe(II)-[cytochrome c] + O2 + 8 H(+)(in) = 4 Fe(III)-[cytochrome c] + 2 H2O + 4 H(+)(out). Its function is as follows. Component of the cytochrome c oxidase, the last enzyme in the mitochondrial electron transport chain which drives oxidative phosphorylation. The respiratory chain contains 3 multisubunit complexes succinate dehydrogenase (complex II, CII), ubiquinol-cytochrome c oxidoreductase (cytochrome b-c1 complex, complex III, CIII) and cytochrome c oxidase (complex IV, CIV), that cooperate to transfer electrons derived from NADH and succinate to molecular oxygen, creating an electrochemical gradient over the inner membrane that drives transmembrane transport and the ATP synthase. Cytochrome c oxidase is the component of the respiratory chain that catalyzes the reduction of oxygen to water. Electrons originating from reduced cytochrome c in the intermembrane space (IMS) are transferred via the dinuclear copper A center (CU(A)) of subunit 2 and heme A of subunit 1 to the active site in subunit 1, a binuclear center (BNC) formed by heme A3 and copper B (CU(B)). The BNC reduces molecular oxygen to 2 water molecules using 4 electrons from cytochrome c in the IMS and 4 protons from the mitochondrial matrix. The protein is Cytochrome c oxidase subunit 2 (MT-CO2) of Dacnomys millardi (Millard's rat).